The sequence spans 398 residues: Cell adhesion molecule 3 (398 aa).

An N-terminal signal peptide occupies residues 1-24 (MGAPAASLLLLLLLFACCWAPGGA). Residues 25–126 (NLSQDDSQPW…VRTAKSLVTV (102 aa)) form the Ig-like V-type domain. Topologically, residues 25–330 (NLSQDDSQPW…PVPSSSSTYH (306 aa)) are extracellular. 3 disulfide bridges follow: C50–C110, C152–C209, and C254–C299. 2 consecutive Ig-like C2-type domains span residues 130–228 (PQKP…QRIE) and 233–315 (PTAM…YTLN). N290 is a glycosylation site (N-linked (GlcNAc...) asparagine). The helical transmembrane segment at 331–351 (AIIGGIVAFIVFLLLIMLIFL) threads the bilayer. Residues 352 to 398 (GHYLIRHKGTYLTHEAKGSDDAPDADTAIINAEGGQSGGDDKKEYFI) are Cytoplasmic-facing. Residues 367–398 (AKGSDDAPDADTAIINAEGGQSGGDDKKEYFI) are disordered. Position 388 is a phosphoserine (S388).

Belongs to the nectin family. Homodimer. Can form trans-heterodimers with NECTIN3. Interacts with EPB41L1, DLG3, PALS2 and CASK. Isoform 1 is expressed mainly in adult and fetal brain. Isoform 2 is highly expressed in adult brain and weakly expressed in placenta. In brain, Isoform 2 is highly expressed in cerebellum.

The protein localises to the cell membrane. It localises to the cell junction. Involved in cell-cell adhesion. Has both calcium-independent homophilic cell-cell adhesion activity and calcium-independent heterophilic cell-cell adhesion activity with IGSF4, NECTIN1 and NECTIN3. Interaction with EPB41L1 may regulate structure or function of cell-cell junctions. The polypeptide is Cell adhesion molecule 3 (CADM3) (Homo sapiens (Human)).